We begin with the raw amino-acid sequence, 810 residues long: Ecotropic viral integration site 5 protein homolog (810 aa).

Residues 1 to 483 (MVTNKMTAAF…EAESQCALKE (483 aa)) form an interaction with alpha-tubulin, gamma-tubulin, BIRC5 and FBXO5 region. Disordered stretches follow at residues 49 to 80 (VASPSTSLHTTSSSTTLSTPALSPSSPSQLSP) and 98 to 123 (TDSKSLRSVNGSRRNSGSSLVSSSSA). Over residues 51–80 (SPSTSLHTTSSSTTLSTPALSPSSPSQLSP) the composition is skewed to low complexity. Ser102 and Ser113 each carry phosphoserine. Residues 103–123 (LRSVNGSRRNSGSSLVSSSSA) show a composition bias toward low complexity. The dimerization stretch occupies residues 128–693 (SHLEEDSWIL…LNKSDSNQYI (566 aa)). One can recognise a Rab-GAP TBC domain in the interval 163–348 (GIPHHFRAIV…RIFDIFMSEG (186 aa)). The segment at 377 to 810 (QHFQKVIPHQ…RRRESYSTTV (434 aa)) is targeting to the centrosomes. Residues 406 to 716 (KKMKKLEKEY…LRCLKGQRGF (311 aa)) adopt a coiled-coil conformation. The tract at residues 487-810 (KVLDIEKRNN…RRRESYSTTV (324 aa)) is interaction with AURKB and INCENP. Residues Ser497, Ser689, Ser776, and Ser778 each carry the phosphoserine modification. Residues 756–810 (GFPLHGKSGSMSLDPAVADGSESETEDSVLETRESNQVVQKERPPRRRESYSTTV) form a disordered region. Over residues 785-810 (LETRESNQVVQKERPPRRRESYSTTV) the composition is skewed to basic and acidic residues.

In terms of assembly, dimeric and monomeric. Interacts with alpha- and gamma-tubulin. Interacts with FBXO5. Interacts with the chromosome passenger complex (CPC) which is at least composed of AURKB/aurora-B, BIRC5/survivin, CDCA8/borealin and INCENP. Probably phosphorylated by PLK1; may be required for degradation during mitosis. In terms of processing, ubiquitinated. Degradation during prophase is ubiquitin-dependent. Expressed in various cell lines (at protein level). Expressed in a wide range of tissues including brain and adrenal.

Its subcellular location is the nucleus. The protein resides in the cytoplasm. It localises to the cytoskeleton. The protein localises to the microtubule organizing center. It is found in the centrosome. Its subcellular location is the spindle. Its function is as follows. Functions as a regulator of cell cycle progression by stabilizing the FBXO5 protein and promoting cyclin-A accumulation during interphase. May play a role in cytokinesis. The sequence is that of Ecotropic viral integration site 5 protein homolog (EVI5) from Homo sapiens (Human).